The chain runs to 257 residues: Small ribosomal subunit protein eS1 (257 aa).

The interval 237–257 (GADGEKVDRPDDYEPPVQQEV) is disordered. The span at 239 to 248 (DGEKVDRPDD) shows a compositional bias: basic and acidic residues.

Belongs to the eukaryotic ribosomal protein eS1 family. Component of the small ribosomal subunit. Mature ribosomes consist of a small (40S) and a large (60S) subunit. The 40S subunit contains about 33 different proteins and 1 molecule of RNA (18S). The 60S subunit contains about 49 different proteins and 3 molecules of RNA (28S, 5.8S and 5S).

It is found in the cytoplasm. In Caenorhabditis elegans, this protein is Small ribosomal subunit protein eS1.